The following is a 304-amino-acid chain: Probable 5-dehydro-4-deoxyglucarate dehydratase (304 aa).

This sequence belongs to the DapA family.

The catalysed reaction is 5-dehydro-4-deoxy-D-glucarate + H(+) = 2,5-dioxopentanoate + CO2 + H2O. Its pathway is carbohydrate acid metabolism; D-glucarate degradation; 2,5-dioxopentanoate from D-glucarate: step 2/2. This is Probable 5-dehydro-4-deoxyglucarate dehydratase from Rhodococcus opacus (strain B4).